A 1472-amino-acid chain; its full sequence is MDIPSSNQIQHGQRSERNRRMPRASFSSTATTSTAATLTSAMVLDQNNSEPYAGATFEAVPSSIVSFHHPHSFQSSNLPSPHSSGNLEQRGRRLTESEPLVLSSAEQSRSSSRNPSHFRFFTQEQISNAEGASTLENTDYDMAWDATPAYEQDRIYGTGLSSRRSSIRSFSRASSLSNAKSYGSFSKRGRSGSRAPQRLGENSDTGFVYHSATHSSSSLSRYTTRERIPIELESQTDEILEDESSTHSLESSDSRRSASENNRGSFSGHDDVHNQHSEYLKPDYHEKFYPQYAPNLHYQRFYIAEEDLVIGIAAYQTSKFWYIIYNLCCFLTFGLVYLLTRWLPHLKVKLYGVKVPLAKAEWVVIENEFGEFVIQPIDRQWYNRPLSTVLPFENYPNPSYEPNDINLSHHHANEINPNVPILITFEYRYIKFIYSPLDDLFKTNNNWIDPDWVDLSTVSNGLTKGVQEDRELAFGKNQINLRMKTTSEILFNEVLHPFYVFQVFSIILWGIDEYYYYAACIFLISVLSIFDSLNEQKKVSRNLAEMSHFHCDVRVLRDKFWTTISSSELVPGDIYEVSDPNITILPCDSILLSSDCIVNESMLTGESVPVSKFPATEETMYQLCDDFQSTQISSFVSKSFLYNGTNIIRARIAPGQTAALAMVVRTGFSTTKGSLVRSMVFPKPTGFKFYRDSFKYIGFMSLIAIFGFCVSCVQFIKLGLDKKTMILRALDIITIVVPPALPATLTIGTNFALSRLKEKGIFCISPTRLNISGKIDVMCFDKTGTLTEDGLDVLGVQISEPNGVRGQKFGELLSDIRQVFPKFSLNDCSSPLDFKSRNFFMSLLTCHSLRSVDGNLLGDPLDFKMFQFTGWSFEEDFQKRAFHSLYEGRHEDDVFPENSEIIPAVVHPDSNNRENTFTDNDPHNFLGVVRSFEFLSELRRMSVIVKTNNDDVYWSFTKGAPEVISEICNKSTLPADFEEVLRCYTHNGYRVIACAGKTLPKRTWLYSQKVSREEVESNLEFLGFIIFQNKLKKETSETLKSLQDANIRTIMCTGDNILTAISVGREAGLIQCSRVYVPSINDTPLHGEPVIVWRDVNEPDKILDTKTLKPVKLGNNSVESLRECNYTLAVSGDVFRLLFRDENEIPEEYLNEILLNSSIYARMSPDEKHELMIQLQKLDYTVGFCGDGANDCGALKAADVGISLSEAEASVAAPFTSKIFNISCVLDVIREGRAALVTSFACFQYMSLYSAIQFITITILYSRGSNLGDFQFLYIDLLLIVPIAICMSWSKSYEKIDKKRPSANLVSPKILVPLLISVFLVFLFQFIPWIIVQKMSWYIKPIVGGDDAVQSSDNTVLFFVSNFQYILTAIVLSVGPPYREPMSKNFEFIVDITVSIGASLLLMTLDTESYLGKMLQLTPISNSFTMFIIVWVILNYYAQLYIPPSIKGWLKKKKSSKKYKLLIQEEMKLKEV.

At M1 the chain carries N-acetylmethionine. Composition is skewed to polar residues over residues 1–12 (MDIPSSNQIQHG) and 72–87 (SFQS…SGNL). Disordered stretches follow at residues 1-32 (MDIP…TATT), 71-115 (HSFQ…SRNP), and 179-273 (AKSY…DDVH). Residues 1–293 (MDIPSSNQIQ…YHEKFYPQYA (293 aa)) are Cytoplasmic-facing. T95 bears the Phosphothreonine mark. Low complexity-rich tracts occupy residues 103 to 115 (SSAE…SRNP) and 211 to 222 (SATHSSSSLSRY). At S108 the chain carries Phosphoserine. Residues 234-243 (SQTDEILEDE) show a composition bias toward acidic residues. Residues 294 to 315 (PNLHYQRFYIAEEDLVIGIAAY) form a helical membrane-spanning segment. The Vacuolar segment spans residues 316–321 (QTSKFW). The chain crosses the membrane as a helical span at residues 322–344 (YIIYNLCCFLTFGLVYLLTRWLP). Over 345–488 (HLKVKLYGVK…INLRMKTTSE (144 aa)) the chain is Cytoplasmic. Residues 489–511 (ILFNEVLHPFYVFQVFSIILWGI) traverse the membrane as a helical segment. The Vacuolar segment spans residues 512-514 (DEY). A helical membrane pass occupies residues 515 to 533 (YYYAACIFLISVLSIFDSL). Residues 534-693 (NEQKKVSRNL…PTGFKFYRDS (160 aa)) are Cytoplasmic-facing. A helical transmembrane segment spans residues 694-713 (FKYIGFMSLIAIFGFCVSCV). The Vacuolar portion of the chain corresponds to 714-726 (QFIKLGLDKKTMI). The chain crosses the membrane as a helical span at residues 727–748 (LRALDIITIVVPPALPATLTIG). At 749–1244 (TNFALSRLKE…ALVTSFACFQ (496 aa)) the chain is on the cytoplasmic side. The 4-aspartylphosphate intermediate role is filled by D781. Phosphoserine occurs at positions 1117 and 1120. Residues D1187 and D1191 each coordinate Mg(2+). The chain crosses the membrane as a helical span at residues 1245–1264 (YMSLYSAIQFITITILYSRG). Topologically, residues 1265–1271 (SNLGDFQ) are vacuolar. The chain crosses the membrane as a helical span at residues 1272–1289 (FLYIDLLLIVPIAICMSW). Over 1290 to 1307 (SKSYEKIDKKRPSANLVS) the chain is Cytoplasmic. The chain crosses the membrane as a helical span at residues 1308–1331 (PKILVPLLISVFLVFLFQFIPWII). The Vacuolar portion of the chain corresponds to 1332–1351 (VQKMSWYIKPIVGGDDAVQS). The helical transmembrane segment at 1352–1374 (SDNTVLFFVSNFQYILTAIVLSV) threads the bilayer. At 1375–1387 (GPPYREPMSKNFE) the chain is on the cytoplasmic side. Residues 1388–1407 (FIVDITVSIGASLLLMTLDT) form a helical membrane-spanning segment. Topologically, residues 1408–1423 (ESYLGKMLQLTPISNS) are vacuolar. Residues 1424–1446 (FTMFIIVWVILNYYAQLYIPPSI) form a helical membrane-spanning segment. Residues 1447–1472 (KGWLKKKKSSKKYKLLIQEEMKLKEV) are Cytoplasmic-facing.

The protein belongs to the cation transport ATPase (P-type) (TC 3.A.3) family. Type V subfamily.

It localises to the vacuole membrane. It carries out the reaction ATP + H2O = ADP + phosphate + H(+). Vacuolar transporter which plays a role in sequestration of divalent heavy metal ions. The polypeptide is Vacuolar cation-transporting ATPase YPK9 (YPK9) (Saccharomyces cerevisiae (strain ATCC 204508 / S288c) (Baker's yeast)).